Here is a 1487-residue protein sequence, read N- to C-terminus: Chromosome partition protein MukB (1487 aa).

Residue 34–41 participates in ATP binding; it reads GGNGAGKS. 5 coiled-coil regions span residues 297–426, 460–666, 781–806, 836–1111, and 1210–1266; these read SSRE…LEKA, ALKH…RLAS, RAAR…AKAA, EQAL…RTFV, and VEAI…LSNI. The interval 667-784 is flexible hinge; sequence PGGSNDPRLK…VIPLFGRAAR (118 aa).

The protein belongs to the SMC family. MukB subfamily. Homodimerization via its hinge domain. Binds to DNA via its C-terminal region. Interacts, and probably forms a ternary complex, with MukE and MukF via its C-terminal region. The complex formation is stimulated by calcium or magnesium. Interacts with tubulin-related protein FtsZ.

The protein localises to the cytoplasm. It is found in the nucleoid. Plays a central role in chromosome condensation, segregation and cell cycle progression. Functions as a homodimer, which is essential for chromosome partition. Involved in negative DNA supercoiling in vivo, and by this means organize and compact chromosomes. May achieve or facilitate chromosome segregation by condensation DNA from both sides of a centrally located replisome during cell division. The protein is Chromosome partition protein MukB of Vibrio vulnificus (strain YJ016).